The primary structure comprises 445 residues: Phosphoglucosamine mutase (445 aa).

Catalysis depends on S102, which acts as the Phosphoserine intermediate. S102, D241, D243, and D245 together coordinate Mg(2+). Residue S102 is modified to Phosphoserine.

The protein belongs to the phosphohexose mutase family. The cofactor is Mg(2+). Post-translationally, activated by phosphorylation.

The catalysed reaction is alpha-D-glucosamine 1-phosphate = D-glucosamine 6-phosphate. In terms of biological role, catalyzes the conversion of glucosamine-6-phosphate to glucosamine-1-phosphate. This chain is Phosphoglucosamine mutase, found in Escherichia coli O81 (strain ED1a).